The sequence spans 232 residues: Large ribosomal subunit protein uL1 (232 aa).

It belongs to the universal ribosomal protein uL1 family. Part of the 50S ribosomal subunit.

Binds directly to 23S rRNA. The L1 stalk is quite mobile in the ribosome, and is involved in E site tRNA release. Its function is as follows. Protein L1 is also a translational repressor protein, it controls the translation of the L11 operon by binding to its mRNA. The protein is Large ribosomal subunit protein uL1 of Xylella fastidiosa (strain M23).